The chain runs to 124 residues: Large ribosomal subunit protein uL29 (124 aa).

It belongs to the universal ribosomal protein uL29 family.

This chain is Large ribosomal subunit protein uL29 (RPL35), found in Tetrahymena thermophila (strain SB210).